The primary structure comprises 230 residues: Large ribosomal subunit protein uL1 (230 aa).

This sequence belongs to the universal ribosomal protein uL1 family. In terms of assembly, part of the 50S ribosomal subunit.

Its function is as follows. Binds directly to 23S rRNA. The L1 stalk is quite mobile in the ribosome, and is involved in E site tRNA release. Functionally, protein L1 is also a translational repressor protein, it controls the translation of the L11 operon by binding to its mRNA. The protein is Large ribosomal subunit protein uL1 of Bradyrhizobium sp. (strain BTAi1 / ATCC BAA-1182).